Consider the following 311-residue polypeptide: Heme A synthase (311 aa).

The Cytoplasmic portion of the chain corresponds to 1-6 (MQRFIK). Residues 7-27 (WLAVITSLDLLIVLLGGALVT) form a helical membrane-spanning segment. Residues 28–62 (KTGSGQGCGKSWPLCNGEFVPSNLSMETIIELSHR) lie on the Extracellular side of the membrane. Cysteine 35 and cysteine 42 are oxidised to a cystine. Glutamate 58 is a catalytic residue. A heme o-binding site is contributed by histidine 61. The chain crosses the membrane as a helical span at residues 63-83 (LTSGSAGILVTLLCILSWKYY). The Cytoplasmic segment spans residues 84 to 91 (KHVRETKT). A helical membrane pass occupies residues 92 to 112 (LAILSFVFLVAQALMGAAAVV). At 113–121 (WGQMPAVLA) the chain is on the extracellular side. The chain crosses the membrane as a helical span at residues 122–142 (IHFGISLISFASVILLTCLIF). Residue histidine 123 coordinates heme o. The Cytoplasmic segment spans residues 143–159 (EIDQKFDARSLIMDKKM). The helical transmembrane segment at 160–180 (KFHIYGVTIYSYIVVYTGALV) threads the bilayer. Residues 181–211 (RHERASLACPDFPLCSKNRPMPTQLHEWVQM) lie on the Extracellular side of the membrane. Cysteine 189 and cysteine 195 form a disulfide bridge. A helical transmembrane segment spans residues 212-232 (GHRVAAMLIFAWILYAMILAI). Histidine 213 serves as a coordination point for heme b. Residues 233-243 (RHYKQQPVVYW) are Cytoplasmic-facing. A helical membrane pass occupies residues 244–264 (GWIISFILVTLQAVVGVLVVF). The Extracellular portion of the chain corresponds to 265–271 (TNASLAM). Residues 272–292 (ALLHSLFISCLFAVLCYLVML) form a helical membrane-spanning segment. Histidine 275 is a heme b binding site. Topologically, residues 293–311 (GTRIKVNAKEAGSTSKQTK) are cytoplasmic.

It belongs to the COX15/CtaA family. Type 1 subfamily. Interacts with CtaB. Heme b is required as a cofactor.

Its subcellular location is the cell membrane. It carries out the reaction Fe(II)-heme o + 2 A + H2O = Fe(II)-heme a + 2 AH2. It participates in porphyrin-containing compound metabolism; heme A biosynthesis; heme A from heme O: step 1/1. Functionally, catalyzes the conversion of heme O to heme A by two successive hydroxylations of the methyl group at C8. The first hydroxylation forms heme I, the second hydroxylation results in an unstable dihydroxymethyl group, which spontaneously dehydrates, resulting in the formyl group of heme A. This is Heme A synthase from Bacillus cereus (strain G9842).